Consider the following 127-residue polypeptide: Mitochondrial pyruvate carrier 2 (127 aa).

Topologically, residues 2 to 40 are mitochondrial matrix; that stretch reads AAAGARGLRATYHRLMDKVELLLPKKLRPLYNHPAGPRT. Lys26 bears the N6-acetyllysine mark. A helical transmembrane segment spans residues 41–61; the sequence is VFFWAPIMKWGLVCAGLADMA. Residues 62–72 are Mitochondrial intermembrane-facing; that stretch reads RPAEKLSTAQS. A helical membrane pass occupies residues 73–90; the sequence is TVLMATGFIWSRYSLVII. The Mitochondrial matrix segment spans residues 91–92; sequence PK. The helical transmembrane segment at 93-115 threads the bilayer; the sequence is NWSLFAVNFFVGSAGASQLFRIW. Over 116–127 the chain is Mitochondrial intermembrane; that stretch reads RYNQELKSKGIQ.

This sequence belongs to the mitochondrial pyruvate carrier (MPC) (TC 2.A.105) family. In terms of assembly, homodimer. Homooligomer. Forms heterodimers with MPC1 and MPC1L. The heterodimer is the more stable and dominant form.

It localises to the mitochondrion inner membrane. The enzyme catalyses pyruvate(out) + H(+)(out) = pyruvate(in) + H(+)(in). Mediates the uptake of pyruvate into mitochondria. The sequence is that of Mitochondrial pyruvate carrier 2 (Mpc2) from Mus musculus (Mouse).